Reading from the N-terminus, the 185-residue chain is Elongation factor P (185 aa).

The protein belongs to the elongation factor P family.

The protein resides in the cytoplasm. It participates in protein biosynthesis; polypeptide chain elongation. In terms of biological role, involved in peptide bond synthesis. Stimulates efficient translation and peptide-bond synthesis on native or reconstituted 70S ribosomes in vitro. Probably functions indirectly by altering the affinity of the ribosome for aminoacyl-tRNA, thus increasing their reactivity as acceptors for peptidyl transferase. In Endomicrobium trichonymphae, this protein is Elongation factor P.